The following is a 264-amino-acid chain: tRNA (guanine-N(1)-)-methyltransferase (264 aa).

S-adenosyl-L-methionine contacts are provided by residues glycine 125 and 145–150 (LGDFVL).

This sequence belongs to the RNA methyltransferase TrmD family. In terms of assembly, homodimer.

It localises to the cytoplasm. It catalyses the reaction guanosine(37) in tRNA + S-adenosyl-L-methionine = N(1)-methylguanosine(37) in tRNA + S-adenosyl-L-homocysteine + H(+). Functionally, specifically methylates guanosine-37 in various tRNAs. This Burkholderia cenocepacia (strain HI2424) protein is tRNA (guanine-N(1)-)-methyltransferase.